The chain runs to 207 residues: Uracil phosphoribosyltransferase (207 aa).

Residues Arg77, Arg102, and 129–137 contribute to the 5-phospho-alpha-D-ribose 1-diphosphate site; that span reads DPMLATGGS. Residues Ile192 and 197-199 contribute to the uracil site; that span reads GDA. Residue Asp198 participates in 5-phospho-alpha-D-ribose 1-diphosphate binding.

The protein belongs to the UPRTase family. Mg(2+) serves as cofactor.

It carries out the reaction UMP + diphosphate = 5-phospho-alpha-D-ribose 1-diphosphate + uracil. It participates in pyrimidine metabolism; UMP biosynthesis via salvage pathway; UMP from uracil: step 1/1. Its activity is regulated as follows. Allosterically activated by GTP. In terms of biological role, catalyzes the conversion of uracil and 5-phospho-alpha-D-ribose 1-diphosphate (PRPP) to UMP and diphosphate. This chain is Uracil phosphoribosyltransferase, found in Mycobacterium marinum (strain ATCC BAA-535 / M).